The sequence spans 88 residues: Large ribosomal subunit protein bL31B (88 aa).

Belongs to the bacterial ribosomal protein bL31 family. Type B subfamily. Part of the 50S ribosomal subunit.

This is Large ribosomal subunit protein bL31B from Paraburkholderia xenovorans (strain LB400).